Here is a 385-residue protein sequence, read N- to C-terminus: Serpin-Z10 (385 aa).

Positions 333 to 357 are RCL; it reads GTEAAAVSVGVVSCTSFRRNPDFVA.

Belongs to the serpin family.

Functionally, probable serine protease inhibitor. This is Serpin-Z10 from Arabidopsis thaliana (Mouse-ear cress).